The sequence spans 548 residues: uncharacterized protein (548 aa).

The region spanning 8 to 200 (KLFADMIIQG…LLCVYEGFLK (193 aa)) is the DhaL domain.

This is an uncharacterized protein from Staphylococcus aureus (strain MRSA252).